Consider the following 956-residue polypeptide: Bifunctional glutamine synthetase adenylyltransferase/adenylyl-removing enzyme (956 aa).

Residues 1–450 (MENMSEQALP…YFKETVGGQE (450 aa)) are adenylyl removase. The segment at 456 to 956 (EQWTAQLWSL…IYEQVLNNGQ (501 aa)) is adenylyl transferase.

The protein belongs to the GlnE family. The cofactor is Mg(2+).

It catalyses the reaction [glutamine synthetase]-O(4)-(5'-adenylyl)-L-tyrosine + phosphate = [glutamine synthetase]-L-tyrosine + ADP. It carries out the reaction [glutamine synthetase]-L-tyrosine + ATP = [glutamine synthetase]-O(4)-(5'-adenylyl)-L-tyrosine + diphosphate. Involved in the regulation of glutamine synthetase GlnA, a key enzyme in the process to assimilate ammonia. When cellular nitrogen levels are high, the C-terminal adenylyl transferase (AT) inactivates GlnA by covalent transfer of an adenylyl group from ATP to specific tyrosine residue of GlnA, thus reducing its activity. Conversely, when nitrogen levels are low, the N-terminal adenylyl removase (AR) activates GlnA by removing the adenylyl group by phosphorolysis, increasing its activity. The regulatory region of GlnE binds the signal transduction protein PII (GlnB) which indicates the nitrogen status of the cell. The chain is Bifunctional glutamine synthetase adenylyltransferase/adenylyl-removing enzyme from Shewanella loihica (strain ATCC BAA-1088 / PV-4).